The following is a 192-amino-acid chain: Ion-translocating oxidoreductase complex subunit B (192 aa).

The segment at 1–26 is hydrophobic; sequence MNAIWIAVAAVSLLGLAFGAILGYAS. The 4Fe-4S domain occupies 32–91; the sequence is EDDPVVEKIDEILPQSQCGQCGYPGCRPYAEAISCNGEKINRCAPGGEAVMLKIAELLNV. Positions 49, 52, 57, 74, 117, 120, 123, 127, 147, 150, 153, and 157 each coordinate [4Fe-4S] cluster. 2 consecutive 4Fe-4S ferredoxin-type domains span residues 108–137 and 138–167; these read MVAVIDENNCIGCTKCIQACPVDAIVGATR and AMHTVMSDLCTGCNLCVDPCPTHCISLQPV.

This sequence belongs to the 4Fe4S bacterial-type ferredoxin family. RnfB subfamily. As to quaternary structure, the complex is composed of six subunits: RsxA, RsxB, RsxC, RsxD, RsxE and RsxG. The cofactor is [4Fe-4S] cluster.

It localises to the cell inner membrane. In terms of biological role, part of a membrane-bound complex that couples electron transfer with translocation of ions across the membrane. Required to maintain the reduced state of SoxR. This chain is Ion-translocating oxidoreductase complex subunit B, found in Shigella dysenteriae serotype 1 (strain Sd197).